The following is a 352-amino-acid chain: Tropomodulin-3 (352 aa).

Position 25 is a phosphoserine (serine 25).

Belongs to the tropomodulin family. Binds to the N-terminus of tropomyosin and to actin. Interacts with FLII. As to expression, ubiquitous.

It localises to the cytoplasm. It is found in the cytoskeleton. Blocks the elongation and depolymerization of the actin filaments at the pointed end. The Tmod/TM complex contributes to the formation of the short actin protofilament, which in turn defines the geometry of the membrane skeleton. The protein is Tropomodulin-3 (TMOD3) of Homo sapiens (Human).